Reading from the N-terminus, the 336-residue chain is DNA repair protein Rad51 homolog (336 aa).

Polar residues predominate over residues 1 to 10 (MEKLTNVQAQ). Residues 1-20 (MEKLTNVQAQQEEEEEEGPL) form a disordered region. 124 to 131 (GEFRCGKT) is an ATP binding site.

It belongs to the RecA family. RAD51 subfamily. In terms of assembly, interacts with Rrp6; the interaction is required for the recruitment of spn-A to the DNA-damage response foci. In terms of tissue distribution, highly expressed in ovaries.

The protein localises to the nucleus. It is found in the cytoplasm. Its function is as follows. Plays an important role in homologous strand exchange, a key step in DNA repair through homologous recombination (HR). Binds to single and double-stranded DNA and exhibits DNA-dependent ATPase activity. Underwinds duplex DNA. Spindle genes are required for each of the symmetry-breaking steps that generate polarity during egg axis formation; oocyte positioning at the posterior of the cyst to generate the first AP polarity and inhibition of gurken (grk) signaling to the follicle cell layer to polarize first the AP axis and then DV axis. May have a role in female meiosis. This Drosophila melanogaster (Fruit fly) protein is DNA repair protein Rad51 homolog (spn-A).